The sequence spans 165 residues: Sulfopyruvate decarboxylase subunit alpha (165 aa).

This sequence belongs to the ComD family. In terms of assembly, heterododecamer composed of 6 subunits alpha and 6 subunits beta.

The catalysed reaction is 3-sulfopyruvate + H(+) = sulfoacetaldehyde + CO2. It functions in the pathway cofactor biosynthesis; coenzyme M biosynthesis; sulfoacetaldehyde from phosphoenolpyruvate and sulfite: step 4/4. In terms of biological role, involved in the biosynthesis of the coenzyme M (2-mercaptoethanesulfonic acid). Catalyzes the decarboxylation of sulfopyruvate to sulfoacetaldehyde. This chain is Sulfopyruvate decarboxylase subunit alpha, found in Methanothermobacter thermautotrophicus (strain ATCC 29096 / DSM 1053 / JCM 10044 / NBRC 100330 / Delta H) (Methanobacterium thermoautotrophicum).